The following is a 29-amino-acid chain: Cytochrome b6-f complex subunit 8 (29 aa).

The chain crosses the membrane as a helical span at residues 3-23 (IVGIAWAALMVVFTFSLSLVV).

This sequence belongs to the PetN family. In terms of assembly, the 4 large subunits of the cytochrome b6-f complex are cytochrome b6, subunit IV (17 kDa polypeptide, PetD), cytochrome f and the Rieske protein, while the 4 small subunits are PetG, PetL, PetM and PetN. The complex functions as a dimer.

It localises to the plastid. The protein localises to the chloroplast thylakoid membrane. In terms of biological role, component of the cytochrome b6-f complex, which mediates electron transfer between photosystem II (PSII) and photosystem I (PSI), cyclic electron flow around PSI, and state transitions. This is Cytochrome b6-f complex subunit 8 from Cryptomeria japonica (Japanese cedar).